A 541-amino-acid chain; its full sequence is Reticulophagy regulator 2 (541 aa).

3 helical membrane passes run 75–91 (LHSLVTAATLNGLFWLL), 99–115 (FFLLSISLLTYFLLDLW), and 199–219 (VPGIMISYIVLLSILLWPLVV). Residues 249-282 (LHHKHDKRKRQGKNAPPAGDEPLAETESESEAEL) are disordered. Basic residues predominate over residues 250-260 (HHKHDKRKRQG). A compositionally biased stretch (acidic residues) spans 270-280 (PLAETESESEA). Phosphothreonine is present on Thr-274. 4 positions are modified to phosphoserine: Ser-276, Ser-278, Ser-286, and Ser-306. Thr-329 is subject to Phosphothreonine. Disordered stretches follow at residues 331-389 (VSED…ADKE), 403-440 (THFNGAGSPQEGVKCPPGGPVETLSPEAVSGDLMAPSS), and 459-481 (PSVLPSLPQDSPQALTAPEEEEA). Phosphoserine occurs at positions 332, 339, and 342. A compositionally biased stretch (low complexity) spans 459–475 (PSVLPSLPQDSPQALTA). The LIR motif motif lies at 485 to 490 (EDFELL). Positions 496 to 541 (EQLNAELGLGPEMPPKPPDVLPPPPLGPDSHSLVQSDQEAHAVVEP) are disordered. Pro residues predominate over residues 507–522 (EMPPKPPDVLPPPPLG).

Belongs to the RETREG family. Interacts with ATG8 family modifier proteins MAP1LC3A, MAP1LC3B, GABARAP, GABARAPL1 and GABARAPL2. Interacts with CANX.

It is found in the endoplasmic reticulum membrane. Endoplasmic reticulum (ER)-anchored autophagy regulator which exists in an inactive state under basal conditions but is activated following cellular stress. When activated, induces ER fragmentation and mediates ER delivery into lysosomes through sequestration into autophagosomes via interaction with ATG8 family proteins. Required for collagen quality control in a LIR motif-independent manner. The sequence is that of Reticulophagy regulator 2 (Retreg2) from Rattus norvegicus (Rat).